Here is a 133-residue protein sequence, read N- to C-terminus: Holo-[acyl-carrier-protein] synthase (133 aa).

Residues D8 and E57 each contribute to the Mg(2+) site.

It belongs to the P-Pant transferase superfamily. AcpS family. Requires Mg(2+) as cofactor.

Its subcellular location is the cytoplasm. It catalyses the reaction apo-[ACP] + CoA = holo-[ACP] + adenosine 3',5'-bisphosphate + H(+). Its function is as follows. Transfers the 4'-phosphopantetheine moiety from coenzyme A to a Ser of acyl-carrier-protein. The sequence is that of Holo-[acyl-carrier-protein] synthase from Bartonella quintana (strain Toulouse) (Rochalimaea quintana).